Reading from the N-terminus, the 130-residue chain is P antigen family member 5 (130 aa).

Disordered regions lie at residues 1–88 (MQAP…TDVE) and 101–130 (DAPGDGPDVREGTLPTFDPTKVLEAGEGQL). Positions 14–26 (TREEVRDMSEHVT) are enriched in basic and acidic residues. Polar residues predominate over residues 27-42 (RSQSSERGNDQESSQP). Residues T113 and T116 each carry the phosphothreonine modification.

Belongs to the GAGE family.

This chain is P antigen family member 5 (PAGE5), found in Homo sapiens (Human).